An 855-amino-acid chain; its full sequence is DNA mismatch repair protein MutS (855 aa).

ATP is bound at residue 616-623 (GPNMGGKS).

The protein belongs to the DNA mismatch repair MutS family.

Functionally, this protein is involved in the repair of mismatches in DNA. It is possible that it carries out the mismatch recognition step. This protein has a weak ATPase activity. The protein is DNA mismatch repair protein MutS of Salmonella dublin (strain CT_02021853).